The following is a 425-amino-acid chain: UDP-N-acetylglucosamine 1-carboxyvinyltransferase (425 aa).

23-24 (KN) lines the phosphoenolpyruvate pocket. Arg100 serves as a coordination point for UDP-N-acetyl-alpha-D-glucosamine. Cys124 serves as the catalytic Proton donor. Cys124 is subject to 2-(S-cysteinyl)pyruvic acid O-phosphothioketal. Residues Asp313 and Ile335 each coordinate UDP-N-acetyl-alpha-D-glucosamine.

Belongs to the EPSP synthase family. MurA subfamily.

It is found in the cytoplasm. It catalyses the reaction phosphoenolpyruvate + UDP-N-acetyl-alpha-D-glucosamine = UDP-N-acetyl-3-O-(1-carboxyvinyl)-alpha-D-glucosamine + phosphate. It participates in cell wall biogenesis; peptidoglycan biosynthesis. In terms of biological role, cell wall formation. Adds enolpyruvyl to UDP-N-acetylglucosamine. In Wolbachia pipientis wMel, this protein is UDP-N-acetylglucosamine 1-carboxyvinyltransferase.